Consider the following 1225-residue polypeptide: Cohesin subunit SA-3 (1225 aa).

Positions 1-97 are disordered; it reads MSSPLQRAVG…HSRKQSEPPA (97 aa). Residues 15–26 are compositionally biased toward low complexity; sequence ALSASSSSSASL. Residues 45-54 show a composition bias toward acidic residues; that stretch reads LADEDTDFED. 2 stretches are compositionally biased toward basic residues: residues 59–69 and 76–90; these read NVKKRAAKRPP and KHPK…RHSR. An SCD domain is found at 309 to 394; the sequence is FVHRYRDVLP…SRFKDRMVSM (86 aa). Disordered stretches follow at residues 546 to 567, 1063 to 1113, and 1177 to 1225; these read SEGH…KERK, AETS…STAV, and EEDE…IEDF. Residues 1078–1089 are compositionally biased toward basic and acidic residues; that stretch reads VEGPAKPNREDV. Residues 1090 to 1099 show a composition bias toward low complexity; sequence SSSQEESLQL. The span at 1177–1191 shows a compositional bias: acidic residues; the sequence is EEDEEEELEIQDESN. A compositionally biased stretch (polar residues) spans 1198 to 1209; it reads DMQASSYSSTSE. S1203 is subject to Phosphoserine. Positions 1216–1225 are enriched in acidic residues; sequence DSTELDIEDF.

This sequence belongs to the SCC3 family. In terms of assembly, component of the meiosis-specific cohesin complex, which also contains the SMC1 (SMC1A or SMC1B) and SMC3 heterodimer. Such complex likely contains RAD21, or the meiosis-specific related protein REC8. Interacts with CCDC79/TERB1; recruiting cohesin to telomeres to develop structural rigidity. Phosphorylated. As to expression, testis specific.

It is found in the nucleus. Its subcellular location is the chromosome. It localises to the centromere. In terms of biological role, meiosis specific component of cohesin complex. The cohesin complex is required for the cohesion of sister chromatids after DNA replication. The cohesin complex apparently forms a large proteinaceous ring within which sister chromatids can be trapped. At anaphase, the complex is cleaved and dissociates from chromatin, allowing sister chromatids to segregate. The meiosis-specific cohesin complex probably replaces mitosis specific cohesin complex when it dissociates from chromatin during prophase I. This Homo sapiens (Human) protein is Cohesin subunit SA-3 (STAG3).